A 469-amino-acid polypeptide reads, in one-letter code: 3-isopropylmalate dehydratase large subunit (469 aa).

Residues cysteine 347, cysteine 407, and cysteine 410 each coordinate [4Fe-4S] cluster.

Belongs to the aconitase/IPM isomerase family. LeuC type 1 subfamily. As to quaternary structure, heterodimer of LeuC and LeuD. It depends on [4Fe-4S] cluster as a cofactor.

It carries out the reaction (2R,3S)-3-isopropylmalate = (2S)-2-isopropylmalate. Its pathway is amino-acid biosynthesis; L-leucine biosynthesis; L-leucine from 3-methyl-2-oxobutanoate: step 2/4. In terms of biological role, catalyzes the isomerization between 2-isopropylmalate and 3-isopropylmalate, via the formation of 2-isopropylmaleate. The protein is 3-isopropylmalate dehydratase large subunit of Photorhabdus laumondii subsp. laumondii (strain DSM 15139 / CIP 105565 / TT01) (Photorhabdus luminescens subsp. laumondii).